The following is a 193-amino-acid chain: Transcriptional regulator RamR (193 aa).

The 60-residue stretch at 7–66 (EDKKQALLEAATQAIAQSGIAASTAVIARNAGVAEGTLFRYFATKDELINTLYLHLKQDL) folds into the HTH tetR-type domain. A DNA-binding region (H-T-H motif) is located at residues 29 to 48 (STAVIARNAGVAEGTLFRYF).

In terms of assembly, homodimer. May bind DNA either as a homodimer or as a pair of homodimers. Various chemicals reduce DNA-binding in vitro, including bile acids, such as cholic and chenodeoxycholic acids, and antimicrobial drugs, such as berberine, crystal violet, dequalinium, ethidium bromide and rhodamine 6G. Binds small regulatory RNA StyR3.

Transcriptional regulator. Represses the transcription of the transcriptional activator RamA and, thereby, leads to repression of the expression of the efflux pump subunits AcrA and AcrB, and TolC. Acts by binding directly to the promoter region of the ramA gene. Promoter binding may be inhibited partially by the small regulatory RNA StyR3, perhaps thereby ensuring a basal level of expression of RamA. This chain is Transcriptional regulator RamR, found in Salmonella typhimurium (strain LT2 / SGSC1412 / ATCC 700720).